Here is a 277-residue protein sequence, read N- to C-terminus: MHVFDNNGIELKAECSIGEEDGVYGLILESWGPGDRNKDYNIALDYIIERLVDSGVSQVVVYLASSSVRKHMHSLDERKIHPGEYFTLIGNSPRDIRLKMCGYQAYFSRTGRKEIPSGNRTKRILINVPGIYSDSFWASIIRGELSELSQPTDDESLLNMRVSKLIKKTLSQPEGSRKPVEVERLQKVYVRDPMVKAWILQQSKGICENCGKNAPFYLNDGNPYLEVHHVIPLSSGGADTTDNCVALCPNCHRELHYSKNAKELIEMLYVNINRLQK.

The 51-residue stretch at 207 to 257 (CENCGKNAPFYLNDGNPYLEVHHVIPLSSGGADTTDNCVALCPNCHRELHY) folds into the HNH domain.

In terms of biological role, restriction of 5-methyl and 5-hydroxymethylcytosines at the specific DNA sequence 5'-C(me)CGG-3'. The polypeptide is Type IV methyl-directed restriction enzyme EcoKMcrA (Escherichia coli (strain K12)).